Consider the following 394-residue polypeptide: MAKAKFERVKPHVNVGTIGHVDHGKTTLTAAITNVLAKVYGGVAKDFASIDNAPEERERGITISTSHVEYDTPTRHYAHVDCPGHADYVKNMITGAAQMDGAILVVAATDGPMPQTREHILLSRQVGVPYIIVFMNKCDMVDDEELLELVEMEVRELLSEYDFPGDDLPLIQGSALKALEGEKEWEDKIVELANALDSYIPEPERDIDKAFIMPIEDVFSIQGRGTVVTGRVEAGIIRINDEIEIVGIRDTTKSICTGVEMFRKLLDEGRAGENIGALLRGTKREDVERGQVLAKPGSIKPHTTFESEVYVLSKDEGGRHTPFFKGYRPQFYFRTTDVTGDVQLPEGVEMVMPGDNVKMTVTLIAPIAMDEGLRFAIREGGRTVGAGVVANIVA.

Residues 10-204 (KPHVNVGTIG…ALDSYIPEPE (195 aa)) form the tr-type G domain. The G1 stretch occupies residues 19–26 (GHVDHGKT). A GTP-binding site is contributed by 19–26 (GHVDHGKT). Thr-26 is a binding site for Mg(2+). Residues 60-64 (GITIS) are G2. Residues 81–84 (DCPG) are G3. GTP contacts are provided by residues 81–85 (DCPGH) and 136–139 (NKCD). Positions 136–139 (NKCD) are G4. The tract at residues 174–176 (SAL) is G5.

Belongs to the TRAFAC class translation factor GTPase superfamily. Classic translation factor GTPase family. EF-Tu/EF-1A subfamily. Monomer.

It localises to the cytoplasm. It carries out the reaction GTP + H2O = GDP + phosphate + H(+). GTP hydrolase that promotes the GTP-dependent binding of aminoacyl-tRNA to the A-site of ribosomes during protein biosynthesis. The chain is Elongation factor Tu 2 from Pseudoalteromonas translucida (strain TAC 125).